The chain runs to 220 residues: Ribosomal RNA large subunit methyltransferase E (220 aa).

Over residues 1-10 the composition is skewed to basic and acidic residues; the sequence is MSRSGKDPGK. Residues 1–24 are disordered; the sequence is MSRSGKDPGKRVKTARKRSASSTR. Gly75, Trp77, Asp94, Asp110, and Asp134 together coordinate S-adenosyl-L-methionine. Lys174 functions as the Proton acceptor in the catalytic mechanism.

Belongs to the class I-like SAM-binding methyltransferase superfamily. RNA methyltransferase RlmE family.

It localises to the cytoplasm. The enzyme catalyses uridine(2552) in 23S rRNA + S-adenosyl-L-methionine = 2'-O-methyluridine(2552) in 23S rRNA + S-adenosyl-L-homocysteine + H(+). Its function is as follows. Specifically methylates the uridine in position 2552 of 23S rRNA at the 2'-O position of the ribose in the fully assembled 50S ribosomal subunit. This chain is Ribosomal RNA large subunit methyltransferase E, found in Erythrobacter litoralis (strain HTCC2594).